Consider the following 738-residue polypeptide: Propionyl-CoA carboxylase alpha chain, mitochondrial (738 aa).

The Biotin carboxylation domain maps to 62 to 509 (KFDKILIANR…TTKYLPEVYP (448 aa)). Residues Lys177, 209-270 (SREI…PRHI), Glu261, and Asn296 contribute to the ATP site. Residues 181-378 (KKIATAARVS…IVQQMLRVAY (198 aa)) form the ATP-grasp domain. Positions 336, 349, and 351 each coordinate Mg(2+). Mn(2+) contacts are provided by Glu336, Glu349, and Asn351. Residue Arg353 is part of the active site. Phe409 lines the biotin pocket. In terms of domain architecture, Biotinyl-binding spans 663 to 738 (KAKVDLSTVV…DEGEVLVELE (76 aa)). Lys704 is subject to N6-biotinyllysine.

As to quaternary structure, the holoenzyme is a dodecamer composed of 6 alpha subunits and 6 beta subunits. Interacts with sir-2.2. Biotin serves as cofactor. Mg(2+) is required as a cofactor. The cofactor is Mn(2+). Post-translationally, the biotin cofactor is covalently attached to the C-terminal biotinyl-binding domain and is required for the catalytic activity.

The protein localises to the mitochondrion matrix. It carries out the reaction propanoyl-CoA + hydrogencarbonate + ATP = (S)-methylmalonyl-CoA + ADP + phosphate + H(+). It catalyses the reaction butanoyl-CoA + hydrogencarbonate + ATP = (2S)-ethylmalonyl-CoA + ADP + phosphate + H(+). The protein operates within metabolic intermediate metabolism; propanoyl-CoA degradation; succinyl-CoA from propanoyl-CoA: step 1/3. This is one of the 2 subunits of the biotin-dependent propionyl-CoA carboxylase (PCC), a mitochondrial enzyme involved in the catabolism of odd chain fatty acids, branched-chain amino acids isoleucine, threonine, methionine, and valine and other metabolites. Propionyl-CoA carboxylase catalyzes the carboxylation of propionyl-CoA/propanoyl-CoA to D-methylmalonyl-CoA/(S)-methylmalonyl-CoA. Within the holoenzyme, the alpha subunit catalyzes the ATP-dependent carboxylation of the biotin carried by the biotin carboxyl carrier (BCC) domain, while the beta subunit then transfers the carboxyl group from carboxylated biotin to propionyl-CoA. Propionyl-CoA carboxylase also significantly acts on butyryl-CoA/butanoyl-CoA, which is converted to ethylmalonyl-CoA/(2S)-ethylmalonyl-CoA. Other alternative minor substrates include (2E)-butenoyl-CoA/crotonoyl-CoA. The chain is Propionyl-CoA carboxylase alpha chain, mitochondrial (pcca-1) from Caenorhabditis briggsae.